The following is a 356-amino-acid chain: Probable G-protein coupled receptor 32 (356 aa).

The Extracellular segment spans residues 1 to 44 (MNGVSEGTRGCSDRQPGVLTRDRSCSRKMNSSGCLSEEVGSLRP). N-linked (GlcNAc...) asparagine glycosylation occurs at Asn-30. A helical transmembrane segment spans residues 45–67 (LTVVILSASIVVGVLGNGLVLWM). Over 68-78 (TVFRMARTVST) the chain is Cytoplasmic. The helical transmembrane segment at 79 to 100 (VCFFHLALADFMLSLSLPIAMY) threads the bilayer. At 101-116 (YIVSRQWLLGEWACKL) the chain is on the extracellular side. A disulfide bridge connects residues Cys-114 and Cys-191. The chain crosses the membrane as a helical span at residues 117 to 137 (YITFVFLSYFASNCLLVFISV). Residues 138 to 156 (DRCISVLYPVWALNHRTVQ) are Cytoplasmic-facing. A helical transmembrane segment spans residues 157-178 (RASWLAFGVWLLAAALCSAHLK). The Extracellular portion of the chain corresponds to 179–220 (FRTTRKWNGCTHCYLAFNSDNETAQIWIEGVVEGHIIGTIGH). N-linked (GlcNAc...) asparagine glycosylation is present at Asn-199. A helical membrane pass occupies residues 221–241 (FLLGFLGPLAIIGTCAHLIRA). The Cytoplasmic portion of the chain corresponds to 242 to 257 (KLLREGWVHANRPKRL). A helical transmembrane segment spans residues 258-280 (LLVLVSAFFIFWSPFNVVLLVHL). Over 281–300 (WRRVMLKEIYHPRMLLILQA) the chain is Extracellular. A helical membrane pass occupies residues 301–320 (SFALGCVNSSLNPFLYVFVG). Over 321–356 (RDFQEKFFQSLTSALARAFGEEEFLSSCPRGNAPRE) the chain is Cytoplasmic.

This sequence belongs to the G-protein coupled receptor 1 family. In terms of tissue distribution, expressed in resting primary human macrophages.

The protein resides in the cell membrane. In terms of biological role, G-protein coupled receptor that binds to several ligands including resolvin D1 (RvD1) with high affinity, leading to rapid and transient activation of numerous intracellular signaling pathways. In macrophages, enhances the RvD1-stimulated phagocytic and clearance functions. Macrophages migrate less toward different chemoattractant stimuli but phagocytose more microbial particles. Prevents the increase in Ca(2+) and activation of ERK1/2 used by histamine and its H1 receptor subtype to induce goblet cell secretion by activating PKC and GRK2 to counter-regulate the histamine receptor. In Homo sapiens (Human), this protein is Probable G-protein coupled receptor 32 (GPR32).